A 334-amino-acid polypeptide reads, in one-letter code: Phosphate acyltransferase (334 aa).

The protein belongs to the PlsX family. Homodimer. Probably interacts with PlsY.

It is found in the cytoplasm. It carries out the reaction a fatty acyl-[ACP] + phosphate = an acyl phosphate + holo-[ACP]. Its pathway is lipid metabolism; phospholipid metabolism. Catalyzes the reversible formation of acyl-phosphate (acyl-PO(4)) from acyl-[acyl-carrier-protein] (acyl-ACP). This enzyme utilizes acyl-ACP as fatty acyl donor, but not acyl-CoA. This chain is Phosphate acyltransferase, found in Streptococcus thermophilus (strain CNRZ 1066).